A 390-amino-acid chain; its full sequence is Elongation factor Tu 2 (390 aa).

The tr-type G domain maps to 10 to 203 (KPHLNIGTMG…AVDTYVPMPE (194 aa)). The tract at residues 19–26 (GHVDHGKT) is G1. Residue 19–26 (GHVDHGKT) participates in GTP binding. Residue threonine 26 coordinates Mg(2+). Residues 60-64 (GITIN) form a G2 region. The G3 stretch occupies residues 81–84 (DMPG). GTP-binding positions include 81–85 (DMPGH) and 136–139 (NKAD). Positions 136-139 (NKAD) are G4. A G5 region spans residues 173-175 (SGL).

Belongs to the TRAFAC class translation factor GTPase superfamily. Classic translation factor GTPase family. EF-Tu/EF-1A subfamily. In terms of assembly, monomer.

The protein resides in the cytoplasm. The enzyme catalyses GTP + H2O = GDP + phosphate + H(+). Functionally, GTP hydrolase that promotes the GTP-dependent binding of aminoacyl-tRNA to the A-site of ribosomes during protein biosynthesis. This Streptomyces avermitilis (strain ATCC 31267 / DSM 46492 / JCM 5070 / NBRC 14893 / NCIMB 12804 / NRRL 8165 / MA-4680) protein is Elongation factor Tu 2.